A 479-amino-acid polypeptide reads, in one-letter code: Glycogen synthase (479 aa).

Lys15 contributes to the ADP-alpha-D-glucose binding site.

Belongs to the glycosyltransferase 1 family. Bacterial/plant glycogen synthase subfamily.

The enzyme catalyses [(1-&gt;4)-alpha-D-glucosyl](n) + ADP-alpha-D-glucose = [(1-&gt;4)-alpha-D-glucosyl](n+1) + ADP + H(+). The protein operates within glycan biosynthesis; glycogen biosynthesis. Its function is as follows. Synthesizes alpha-1,4-glucan chains using ADP-glucose. This Roseobacter denitrificans (strain ATCC 33942 / OCh 114) (Erythrobacter sp. (strain OCh 114)) protein is Glycogen synthase.